Reading from the N-terminus, the 518-residue chain is Glucose-1-phosphate adenylyltransferase large subunit 2, cytosolic (518 aa).

The protein belongs to the bacterial/plant glucose-1-phosphate adenylyltransferase family. As to quaternary structure, heterotetramer composed of two small and two large subunits.

The protein localises to the cytoplasm. Its subcellular location is the cytosol. It catalyses the reaction alpha-D-glucose 1-phosphate + ATP + H(+) = ADP-alpha-D-glucose + diphosphate. The protein operates within glycan biosynthesis; starch biosynthesis. Activated by 3'phosphoglycerate, inhibited by orthophosphate. Allosteric regulation. Inhibited by inorganic phosphate (Pi). In terms of biological role, involved in synthesis of starch. Catalyzes the synthesis of ADP-glucose, a molecule that serves as an activated glycosyl donor for alpha-1,4-glucan synthesis. Essential for starch synthesis in seed endosperm. Is essential for both catalytic and allosteric regulatory properties of the cytosolic heterotetramer enzyme. The protein is Glucose-1-phosphate adenylyltransferase large subunit 2, cytosolic of Oryza sativa subsp. japonica (Rice).